We begin with the raw amino-acid sequence, 82 residues long: MRLVVCLVFLASFALVCQGQVYKGGYTRPIPRPPPFVRPLPGGPISPYNGCPVSCRGISFSQARSCCSRLGRCCHVGKGYSG.

The N-terminal stretch at 1 to 19 is a signal peptide; it reads MRLVVCLVFLASFALVCQG. Gln-20 carries the pyrrolidone carboxylic acid modification. 3 disulfide bridges follow: Cys-51/Cys-66, Cys-55/Cys-73, and Cys-67/Cys-74. At Ser-81 the chain carries Serine amide.

Belongs to the penaeidin family.

It localises to the cytoplasmic granule. Its function is as follows. Antibacterial and antifungal activity. Presents chitin-binding activity. The protein is Penaeidin-3g of Penaeus vannamei (Whiteleg shrimp).